The primary structure comprises 116 residues: Cell cycle protein GpsB (116 aa).

A coiled-coil region spans residues 32-69; sequence LDDVIKDYETYSALVKELREENSRLKQELSKRMQEAPN. The interval 57-78 is disordered; that stretch reads KQELSKRMQEAPNSTASQVHQS. Over residues 67–78 the composition is skewed to polar residues; that stretch reads APNSTASQVHQS.

It belongs to the GpsB family. As to quaternary structure, forms polymers through the coiled coil domains. Interacts with PBP1, MreC and EzrA.

The protein localises to the cytoplasm. In terms of biological role, divisome component that associates with the complex late in its assembly, after the Z-ring is formed, and is dependent on DivIC and PBP2B for its recruitment to the divisome. Together with EzrA, is a key component of the system that regulates PBP1 localization during cell cycle progression. Its main role could be the removal of PBP1 from the cell pole after pole maturation is completed. Also contributes to the recruitment of PBP1 to the division complex. Not essential for septum formation. The chain is Cell cycle protein GpsB from Streptococcus gordonii (strain Challis / ATCC 35105 / BCRC 15272 / CH1 / DL1 / V288).